The chain runs to 195 residues: Transmembrane protein 239 (195 aa).

Helical transmembrane passes span 105 to 125 and 145 to 171; these read LWGL…HALF and HLLP…LLLF.

The protein resides in the membrane. The chain is Transmembrane protein 239 (TMEM239) from Homo sapiens (Human).